A 226-amino-acid polypeptide reads, in one-letter code: Glycerol-3-phosphate acyltransferase (226 aa).

The next 6 membrane-spanning stretches (helical) occupy residues 1-21 (MGFWLSLCGAVVLVAYLLGSF), 60-80 (FVLGLDCLKGVLAIALVYYLF), 102-122 (LVTLAGIAAILGHSKSIFLGF), 134-154 (ILLAMNWQVGLATFGVFAVVV), 159-178 (IVSLSSIMGAIAVSIVMVFL), and 182-197 (LPYILFGIAGGLYVIL).

The protein belongs to the PlsY family. Probably interacts with PlsX.

The protein resides in the cell inner membrane. The enzyme catalyses an acyl phosphate + sn-glycerol 3-phosphate = a 1-acyl-sn-glycero-3-phosphate + phosphate. It participates in lipid metabolism; phospholipid metabolism. Its function is as follows. Catalyzes the transfer of an acyl group from acyl-phosphate (acyl-PO(4)) to glycerol-3-phosphate (G3P) to form lysophosphatidic acid (LPA). This enzyme utilizes acyl-phosphate as fatty acyl donor, but not acyl-CoA or acyl-ACP. This is Glycerol-3-phosphate acyltransferase from Nostoc sp. (strain PCC 7120 / SAG 25.82 / UTEX 2576).